Consider the following 141-residue polypeptide: Large ribosomal subunit protein bL17 (141 aa).

This sequence belongs to the bacterial ribosomal protein bL17 family. As to quaternary structure, part of the 50S ribosomal subunit. Contacts protein L32.

The protein is Large ribosomal subunit protein bL17 of Maridesulfovibrio salexigens (strain ATCC 14822 / DSM 2638 / NCIMB 8403 / VKM B-1763) (Desulfovibrio salexigens).